Here is a 446-residue protein sequence, read N- to C-terminus: Phosphoglucosamine mutase (446 aa).

Ser102 (phosphoserine intermediate) is an active-site residue. The Mg(2+) site is built by Ser102, Asp241, Asp243, and Asp245. Ser102 bears the Phosphoserine mark.

The protein belongs to the phosphohexose mutase family. Mg(2+) serves as cofactor. In terms of processing, activated by phosphorylation.

The enzyme catalyses alpha-D-glucosamine 1-phosphate = D-glucosamine 6-phosphate. Functionally, catalyzes the conversion of glucosamine-6-phosphate to glucosamine-1-phosphate. The chain is Phosphoglucosamine mutase from Idiomarina loihiensis (strain ATCC BAA-735 / DSM 15497 / L2-TR).